The following is a 136-amino-acid chain: Large ribosomal subunit protein uL22 (136 aa).

It belongs to the universal ribosomal protein uL22 family. In terms of assembly, part of the 50S ribosomal subunit.

This protein binds specifically to 23S rRNA; its binding is stimulated by other ribosomal proteins, e.g. L4, L17, and L20. It is important during the early stages of 50S assembly. It makes multiple contacts with different domains of the 23S rRNA in the assembled 50S subunit and ribosome. Functionally, the globular domain of the protein is located near the polypeptide exit tunnel on the outside of the subunit, while an extended beta-hairpin is found that lines the wall of the exit tunnel in the center of the 70S ribosome. This is Large ribosomal subunit protein uL22 from Leifsonia xyli subsp. xyli (strain CTCB07).